We begin with the raw amino-acid sequence, 1387 residues long: DNA-directed RNA polymerase subunit beta (1387 aa).

Belongs to the RNA polymerase beta chain family. As to quaternary structure, the RNAP catalytic core consists of 2 alpha, 1 beta, 1 beta' and 1 omega subunit. When a sigma factor is associated with the core the holoenzyme is formed, which can initiate transcription.

It carries out the reaction RNA(n) + a ribonucleoside 5'-triphosphate = RNA(n+1) + diphosphate. DNA-dependent RNA polymerase catalyzes the transcription of DNA into RNA using the four ribonucleoside triphosphates as substrates. This is DNA-directed RNA polymerase subunit beta from Xanthomonas campestris pv. campestris (strain 8004).